The primary structure comprises 404 residues: Multidrug resistance protein MdtG (404 aa).

The next 11 helical transmembrane spans lie at 19–39, 56–76, 90–110, 113–133, 144–164, 171–191, 222–242, 254–274, 288–308, 317–337, and 376–396; these read LGCF…PLYV, LVFS…GGLA, LGMA…QFLI, ALLG…ATQV, TLST…GLLA, PVFF…FFFI, LFVT…ILTL, IAFI…LSAP, ILIV…FVQT, FLLG…LVYN, and AVFC…WNSL.

The protein belongs to the major facilitator superfamily. DHA1 family. MdtG (TC 2.A.1.2.20) subfamily.

The protein localises to the cell inner membrane. The sequence is that of Multidrug resistance protein MdtG from Salmonella heidelberg (strain SL476).